The sequence spans 118 residues: Small nuclear ribonucleoprotein Sm D2 (118 aa).

Positions 1-31 (MSLLNKPKSEMTPEELQKREEEEFNTGPLSV) are disordered. Serine 2 is modified (N-acetylserine). Residues lysine 6 and lysine 8 each participate in a glycyl lysine isopeptide (Lys-Gly) (interchain with G-Cter in SUMO2) cross-link. Residues 7–21 (PKSEMTPEELQKREE) are compositionally biased toward basic and acidic residues. A Phosphoserine modification is found at serine 9. Threonine 12 is subject to Phosphothreonine. The Sm domain occupies 29–115 (LSVLTQSVKN…VIVVLRNPLI (87 aa)).

Belongs to the snRNP core protein family. As to quaternary structure, core component of the spliceosomal U1, U2, U4 and U5 small nuclear ribonucleoproteins (snRNPs), the building blocks of the spliceosome. Most spliceosomal snRNPs contain a common set of Sm proteins, SNRPB, SNRPD1, SNRPD2, SNRPD3, SNRPE, SNRPF and SNRPG that assemble in a heptameric protein ring on the Sm site of the small nuclear RNA to form the core snRNP. Component of the U1 snRNP. The U1 snRNP is composed of the U1 snRNA and the 7 core Sm proteins SNRPB, SNRPD1, SNRPD2, SNRPD3, SNRPE, SNRPF and SNRPG, and at least three U1 snRNP-specific proteins SNRNP70/U1-70K, SNRPA/U1-A and SNRPC/U1-C. Component of the U4/U6-U5 tri-snRNP complex composed of the U4, U6 and U5 snRNAs and at least PRPF3, PRPF4, PRPF6, PRPF8, PRPF31, SNRNP200, TXNL4A, SNRNP40, SNRPB, SNRPD1, SNRPD2, SNRPD3, SNRPE, SNRPF, SNRPG, DDX23, CD2BP2, PPIH, SNU13, EFTUD2, SART1 and USP39, plus LSM2, LSM3, LSM4, LSM5, LSM6, LSM7 and LSM8. Component of the minor spliceosome, which splices U12-type introns. Part of the SMN-Sm complex that contains SMN1, GEMIN2/SIP1, DDX20/GEMIN3, GEMIN4, GEMIN5, GEMIN6, GEMIN7, GEMIN8, STRAP/UNRIP and the Sm proteins SNRPB, SNRPD1, SNRPD2, SNRPD3, SNRPE, SNRPF and SNRPG; catalyzes core snRNPs assembly. Forms a 6S pICln-Sm complex composed of CLNS1A/pICln, SNRPD1, SNRPD2, SNRPE, SNRPF and SNRPG; ring-like structure where CLNS1A/pICln mimics additional Sm proteins and which is unable to assemble into the core snRNP. Interacts with SMN1; the interaction is direct. Interacts with GEMIN2; the interaction is direct. Interacts with SNRPD1; the interaction is direct. Interacts with SNRPF; the interaction is direct.

The protein localises to the cytoplasm. The protein resides in the cytosol. It localises to the nucleus. In terms of biological role, plays a role in pre-mRNA splicing as a core component of the spliceosomal U1, U2, U4 and U5 small nuclear ribonucleoproteins (snRNPs), the building blocks of the spliceosome. Component of both the pre-catalytic spliceosome B complex and activated spliceosome C complexes. As a component of the minor spliceosome, involved in the splicing of U12-type introns in pre-mRNAs. The protein is Small nuclear ribonucleoprotein Sm D2 (SNRPD2) of Homo sapiens (Human).